Consider the following 363-residue polypeptide: Aminomethyltransferase (363 aa).

The protein belongs to the GcvT family. The glycine cleavage system is composed of four proteins: P, T, L and H.

The catalysed reaction is N(6)-[(R)-S(8)-aminomethyldihydrolipoyl]-L-lysyl-[protein] + (6S)-5,6,7,8-tetrahydrofolate = N(6)-[(R)-dihydrolipoyl]-L-lysyl-[protein] + (6R)-5,10-methylene-5,6,7,8-tetrahydrofolate + NH4(+). In terms of biological role, the glycine cleavage system catalyzes the degradation of glycine. The sequence is that of Aminomethyltransferase from Staphylococcus epidermidis (strain ATCC 35984 / DSM 28319 / BCRC 17069 / CCUG 31568 / BM 3577 / RP62A).